The primary structure comprises 159 residues: Ribosomal RNA large subunit methyltransferase H (159 aa).

S-adenosyl-L-methionine is bound by residues Leu-76, Gly-108, and 127–132 (FGLLTL).

The protein belongs to the RNA methyltransferase RlmH family. In terms of assembly, homodimer.

It localises to the cytoplasm. It carries out the reaction pseudouridine(1915) in 23S rRNA + S-adenosyl-L-methionine = N(3)-methylpseudouridine(1915) in 23S rRNA + S-adenosyl-L-homocysteine + H(+). Functionally, specifically methylates the pseudouridine at position 1915 (m3Psi1915) in 23S rRNA. The sequence is that of Ribosomal RNA large subunit methyltransferase H from Streptococcus pyogenes serotype M6 (strain ATCC BAA-946 / MGAS10394).